Consider the following 129-residue polypeptide: Glycine cleavage system H protein (129 aa).

Positions leucine 24 to lysine 106 constitute a Lipoyl-binding domain. Residue lysine 65 is modified to N6-lipoyllysine.

Belongs to the GcvH family. The glycine cleavage system is composed of four proteins: P, T, L and H. It depends on (R)-lipoate as a cofactor.

The glycine cleavage system catalyzes the degradation of glycine. The H protein shuttles the methylamine group of glycine from the P protein to the T protein. The sequence is that of Glycine cleavage system H protein from Prochlorococcus marinus (strain MIT 9312).